A 648-amino-acid chain; its full sequence is Probable alpha-galactosidase D (648 aa).

The N-terminal stretch at 1-17 is a signal peptide; the sequence is MESIVWLLLLSPALVAG. 2 N-linked (GlcNAc...) asparagine glycosylation sites follow: N84 and N90. A disulfide bond links C123 and C156. Catalysis depends on D154, which acts as the Nucleophile. 199 to 203 is a binding site for substrate; sequence EWGID. Catalysis depends on D221, which acts as the Proton donor. Residues N339, N505, and N572 are each glycosylated (N-linked (GlcNAc...) asparagine).

This sequence belongs to the glycosyl hydrolase 27 family.

Its subcellular location is the secreted. It carries out the reaction Hydrolysis of terminal, non-reducing alpha-D-galactose residues in alpha-D-galactosides, including galactose oligosaccharides, galactomannans and galactolipids.. Hydrolyzes a variety of simple alpha-D-galactoside as well as more complex molecules such as oligosaccharides and polysaccharides. The chain is Probable alpha-galactosidase D (aglD) from Neosartorya fischeri (strain ATCC 1020 / DSM 3700 / CBS 544.65 / FGSC A1164 / JCM 1740 / NRRL 181 / WB 181) (Aspergillus fischerianus).